The primary structure comprises 466 residues: Flagellum-specific ATP synthase (466 aa).

Ser-194–Ser-201 is a binding site for ATP.

Belongs to the ATPase alpha/beta chains family.

The protein resides in the cytoplasm. It catalyses the reaction ATP + H2O + 4 H(+)(in) = ADP + phosphate + 5 H(+)(out). Probable catalytic subunit of a protein translocase for flagellum-specific export, or a proton translocase involved in local circuits at the flagellum. May be involved in a specialized protein export pathway that proceeds without signal peptide cleavage. The sequence is that of Flagellum-specific ATP synthase (fliI) from Buchnera aphidicola subsp. Schizaphis graminum (strain Sg).